An 82-amino-acid polypeptide reads, in one-letter code: Small ribosomal subunit protein bS16 (82 aa).

Belongs to the bacterial ribosomal protein bS16 family.

This is Small ribosomal subunit protein bS16 from Tolumonas auensis (strain DSM 9187 / NBRC 110442 / TA 4).